A 417-amino-acid polypeptide reads, in one-letter code: Putative F-box protein At4g21240 (417 aa).

Over residues 1-12 the composition is skewed to acidic residues; that stretch reads MDRREEEEEETG. Residues 1 to 25 are disordered; the sequence is MDRREEEEEETGYGEKGTRNQSKED. The span at 16 to 25 shows a compositional bias: basic and acidic residues; the sequence is KGTRNQSKED. Positions 30–76 constitute an F-box domain; it reads GKIFELIPLDMIPDILLRLPAKSAVRFRIVSKLWLSITTRPYFIRSF.

The sequence is that of Putative F-box protein At4g21240 from Arabidopsis thaliana (Mouse-ear cress).